The primary structure comprises 131 residues: Large-conductance mechanosensitive channel (131 aa).

3 consecutive transmembrane segments (helical) span residues 14 to 34 (IMDL…VTSL), 38 to 58 (IIMP…LAVT), and 67 to 87 (GSFI…FIVI).

The protein belongs to the MscL family. Homopentamer.

It localises to the cell membrane. Channel that opens in response to stretch forces in the membrane lipid bilayer. May participate in the regulation of osmotic pressure changes within the cell. In Bacillus velezensis (strain DSM 23117 / BGSC 10A6 / LMG 26770 / FZB42) (Bacillus amyloliquefaciens subsp. plantarum), this protein is Large-conductance mechanosensitive channel.